Consider the following 101-residue polypeptide: NADH-quinone oxidoreductase subunit K (101 aa).

A run of 3 helical transmembrane segments spans residues 5 to 25 (LGQV…GVLL), 29 to 49 (LIMI…VLVG), and 62 to 82 (VALL…ALVV).

This sequence belongs to the complex I subunit 4L family. In terms of assembly, NDH-1 is composed of 14 different subunits. Subunits NuoA, H, J, K, L, M, N constitute the membrane sector of the complex.

The protein resides in the cell inner membrane. It carries out the reaction a quinone + NADH + 5 H(+)(in) = a quinol + NAD(+) + 4 H(+)(out). Functionally, NDH-1 shuttles electrons from NADH, via FMN and iron-sulfur (Fe-S) centers, to quinones in the respiratory chain. The immediate electron acceptor for the enzyme in this species is believed to be ubiquinone. Couples the redox reaction to proton translocation (for every two electrons transferred, four hydrogen ions are translocated across the cytoplasmic membrane), and thus conserves the redox energy in a proton gradient. The sequence is that of NADH-quinone oxidoreductase subunit K from Syntrophotalea carbinolica (strain DSM 2380 / NBRC 103641 / GraBd1) (Pelobacter carbinolicus).